Here is a 234-residue protein sequence, read N- to C-terminus: Small ribosomal subunit protein uS3 (234 aa).

Residues 39-107 (IRKFLKKELY…EVSINIKEVK (69 aa)) enclose the KH type-2 domain.

The protein belongs to the universal ribosomal protein uS3 family. As to quaternary structure, part of the 30S ribosomal subunit. Forms a tight complex with proteins S10 and S14.

Its function is as follows. Binds the lower part of the 30S subunit head. Binds mRNA in the 70S ribosome, positioning it for translation. The sequence is that of Small ribosomal subunit protein uS3 from Helicobacter pylori (strain G27).